Here is a 211-residue protein sequence, read N- to C-terminus: MIDSTTELRPLTKRQQQIYDLIKAKIQDTGMPPTRAEIANFFGFKSANAAEEHLKALAKKGYIEMLAGTSRGIRLVEEMLEAEGLPLIGRVAAGEPILAQEHIEEHYKMDGNLFHPAADYLLRVNGESMKDIGILDGDLLAVHQTTEVQNGQVVVARVENDVTVKRFKREGNVVYLHAENEDFSPIKVDLANQEFNIEGIAVGIIRSGRWM.

A DNA-binding region (H-T-H motif) is located at residues 35–55 (RAEIANFFGFKSANAAEEHLK). Catalysis depends on for autocatalytic cleavage activity residues S128 and K165.

The protein belongs to the peptidase S24 family. Homodimer.

The catalysed reaction is Hydrolysis of Ala-|-Gly bond in repressor LexA.. Functionally, represses a number of genes involved in the response to DNA damage (SOS response), including recA and lexA. In the presence of single-stranded DNA, RecA interacts with LexA causing an autocatalytic cleavage which disrupts the DNA-binding part of LexA, leading to derepression of the SOS regulon and eventually DNA repair. This Colwellia psychrerythraea (strain 34H / ATCC BAA-681) (Vibrio psychroerythus) protein is LexA repressor.